A 461-amino-acid chain; its full sequence is Porin AaxA (461 aa).

The first 22 residues, 1 to 22, serve as a signal peptide directing secretion; that stretch reads MSFRSILLTALLSLSFTNTMQA.

This sequence belongs to the OprB family.

Its subcellular location is the cell outer membrane. Facilitates L-arginine uptake, as part of the AaxABC system. The arginine uptake by the bacterium in the macrophage may be a virulence factor against the host innate immune response. The protein is Porin AaxA (aaxA) of Chlamydia muridarum (strain MoPn / Nigg).